The sequence spans 390 residues: GTPase Obg (390 aa).

One can recognise an Obg domain in the interval 1-159 (MKFVDEASIL…RDLLLELMLL (159 aa)). The tract at residues 127-147 (NTRFKSSVNRTPRQKTNGTPG) is disordered. A compositionally biased stretch (polar residues) spans 129-145 (RFKSSVNRTPRQKTNGT). One can recognise an OBG-type G domain in the interval 160-333 (ADVGMLGMPN…LCWDVMTFII (174 aa)). Residues 166-173 (GMPNAGKS), 191-195 (FTTLV), 213-216 (DIPG), 283-286 (NKID), and 314-316 (SAA) each bind GTP. Ser173 and Thr193 together coordinate Mg(2+).

This sequence belongs to the TRAFAC class OBG-HflX-like GTPase superfamily. OBG GTPase family. Monomer. It depends on Mg(2+) as a cofactor.

Its subcellular location is the cytoplasm. Its function is as follows. An essential GTPase which binds GTP, GDP and possibly (p)ppGpp with moderate affinity, with high nucleotide exchange rates and a fairly low GTP hydrolysis rate. Plays a role in control of the cell cycle, stress response, ribosome biogenesis and in those bacteria that undergo differentiation, in morphogenesis control. This is GTPase Obg from Salmonella gallinarum (strain 287/91 / NCTC 13346).